We begin with the raw amino-acid sequence, 327 residues long: uncharacterized protein (327 aa).

The region spanning 12 to 84 is the S4 RNA-binding domain; it reads MRIDRYLTQQ…IPITILYEDD (73 aa). Residue D137 is part of the active site.

It belongs to the pseudouridine synthase RluA family.

It catalyses the reaction a uridine in RNA = a pseudouridine in RNA. This is an uncharacterized protein from Chlorobaculum parvum (strain DSM 263 / NCIMB 8327) (Chlorobium vibrioforme subsp. thiosulfatophilum).